The following is a 181-amino-acid chain: Cytidylate kinase (181 aa).

An ATP-binding site is contributed by 7-15 (GPPGSGTTS).

The protein belongs to the cytidylate kinase family. Type 2 subfamily.

The protein localises to the cytoplasm. The enzyme catalyses CMP + ATP = CDP + ADP. It carries out the reaction dCMP + ATP = dCDP + ADP. This is Cytidylate kinase from Methanoculleus marisnigri (strain ATCC 35101 / DSM 1498 / JR1).